Consider the following 666-residue polypeptide: Probable potassium transport system protein Kup (666 aa).

A run of 12 helical transmembrane segments spans residues Phe53 to Leu73, Val89 to Val109, Leu144 to Thr164, Pro181 to Val201, Ala212 to Ile232, Ala247 to Leu267, Trp291 to Leu311, Leu324 to Ala344, Ile381 to Phe401, Tyr411 to Trp431, Ala441 to Leu461, and Leu463 to Thr483.

This sequence belongs to the HAK/KUP transporter (TC 2.A.72) family.

It is found in the cell inner membrane. It catalyses the reaction K(+)(in) + H(+)(in) = K(+)(out) + H(+)(out). Its function is as follows. Transport of potassium into the cell. Likely operates as a K(+):H(+) symporter. The polypeptide is Probable potassium transport system protein Kup (Nitrobacter hamburgensis (strain DSM 10229 / NCIMB 13809 / X14)).